The sequence spans 471 residues: MERGEEAPTEGAPPEGALVEAKAPVIPEAPATDVSTTEEAGSKEPQVPSGPRPEGAGDTCDTRGARGPPTPGRAKSQKTPRQGTARCQTLESAMRSMSVRLECHDVEEQFILRLPPEQAYAVRKIIHSRNAAWKDKLKIDFSPDGHHAVVQVDNVSLPAKLVNLPCVIGSLKTIDRKTFYKTADVSQMLVCSPEGEPHSPPEEPVVSTGPTVIGISEGKAERKKYNWKHGITPPLKNVRKKRFRKTTKKLPDVKQVDEINFSEYTQSPSVEKEVKRLLYSDAEAVSVRWEVVDDDDAKEIESQGSMPTTPGISQMGGASLSDYDVFREMMGDSGSNSNDVEEKSNEGDDDDDEDEDDEDYGNEKEEEETDNSEEELEKELQAKFNEFSLHEADQDYSSITMAIQKLIFIKEKRLQMIYKKAQRQKELLRKVENLTLKRHFQNVLGKLNIMEKEKCEQIYHLQEQLKCFLKE.

Disordered stretches follow at residues 1–84, 192–211, and 328–377; these read MERG…RQGT, SPEG…TGPT, and EMMG…EELE. Serine 199 is modified (phosphoserine). The segment covering 347-377 has biased composition (acidic residues); sequence GDDDDDEDEDDEDYGNEKEEEETDNSEEELE. A coiled-coil region spans residues 358-433; the sequence is EDYGNEKEEE…QKELLRKVEN (76 aa).

It belongs to the TAF7 family. In terms of assembly, TFIID is composed of TATA binding protein (TBP) and a number of TBP-associated factors (TAFs). TAF7L may replace TAF7 in a spermatogenesis-specific form of TFIID. Interacts with TBP; the interaction occurs in a sub-population of cells (pachytene and haploid round spermatids) and is developmentally regulated through differential intracellular localization of the two proteins. Interacts with TAF1. Testis-specific (at protein level). Expressed during spermatogenesis from spermatogonia stage up to the stage of round spermatids.

The protein resides in the nucleus. It is found in the cytoplasm. Its function is as follows. Probably functions as a spermatogenesis-specific component of the DNA-binding general transcription factor complex TFIID, a multimeric protein complex that plays a central role in mediating promoter responses to various activators and repressors. May play a role in spermatogenesis. In Mus musculus (Mouse), this protein is Transcription initiation factor TFIID subunit 7-like (Taf7l).